The following is a 418-amino-acid chain: Tubulin alpha chain (418 aa).

Positions 11, 71, 140, 144, 179, 206, and 228 each coordinate GTP. Glu-71 contributes to the Mg(2+) binding site. Residue Glu-255 is part of the active site.

This sequence belongs to the tubulin family. In terms of assembly, dimer of alpha and beta chains. A typical microtubule is a hollow water-filled tube with an outer diameter of 25 nm and an inner diameter of 15 nM. Alpha-beta heterodimers associate head-to-tail to form protofilaments running lengthwise along the microtubule wall with the beta-tubulin subunit facing the microtubule plus end conferring a structural polarity. Microtubules usually have 13 protofilaments but different protofilament numbers can be found in some organisms and specialized cells. Mg(2+) serves as cofactor.

Its subcellular location is the cytoplasm. The protein resides in the cytoskeleton. It catalyses the reaction GTP + H2O = GDP + phosphate + H(+). Its function is as follows. Tubulin is the major constituent of microtubules, a cylinder consisting of laterally associated linear protofilaments composed of alpha- and beta-tubulin heterodimers. Microtubules grow by the addition of GTP-tubulin dimers to the microtubule end, where a stabilizing cap forms. Below the cap, tubulin dimers are in GDP-bound state, owing to GTPase activity of alpha-tubulin. In Ajellomyces capsulatus (Darling's disease fungus), this protein is Tubulin alpha chain (TUB1).